A 355-amino-acid polypeptide reads, in one-letter code: Meiotic coiled-coil protein 4 (355 aa).

Residues 298–338 (QRLSRTEINKEIIEIEKLELEVVQFQMSIANLINTQVEVTN) adopt a coiled-coil conformation.

The protein resides in the cytoplasm. Its function is as follows. Has a role in meiosis. This chain is Meiotic coiled-coil protein 4 (mcp4), found in Schizosaccharomyces pombe (strain 972 / ATCC 24843) (Fission yeast).